Consider the following 235-residue polypeptide: Purine nucleoside phosphorylase DeoD-type (235 aa).

Position 4 (His-4) interacts with a purine D-ribonucleoside. Residues Gly-20, Arg-24, Arg-43, and Arg-87–Thr-90 contribute to the phosphate site. A purine D-ribonucleoside is bound by residues Glu-178–Glu-180 and Ser-202–Asp-203. Catalysis depends on Asp-203, which acts as the Proton donor.

This sequence belongs to the PNP/UDP phosphorylase family. As to quaternary structure, homohexamer; trimer of homodimers.

The enzyme catalyses a purine D-ribonucleoside + phosphate = a purine nucleobase + alpha-D-ribose 1-phosphate. It carries out the reaction a purine 2'-deoxy-D-ribonucleoside + phosphate = a purine nucleobase + 2-deoxy-alpha-D-ribose 1-phosphate. Catalyzes the reversible phosphorolytic breakdown of the N-glycosidic bond in the beta-(deoxy)ribonucleoside molecules, with the formation of the corresponding free purine bases and pentose-1-phosphate. This chain is Purine nucleoside phosphorylase DeoD-type, found in Geobacillus sp. (strain WCH70).